The chain runs to 338 residues: Ketol-acid reductoisomerase (NADP(+)) (338 aa).

The region spanning 1–181 is the KARI N-terminal Rossmann domain; it reads MKVFYDKDCD…GGGKAGIIET (181 aa). Residues 24–27, arginine 47, and serine 52 each bind NADP(+); that span reads YGSQ. The active site involves histidine 107. Position 133 (glycine 133) interacts with NADP(+). The region spanning 182-327 is the KARI C-terminal knotted domain; the sequence is TFREETETDL…EKLRAMMPWI (146 aa). Mg(2+) contacts are provided by aspartate 190, glutamate 194, glutamate 226, and glutamate 230. Substrate is bound at residue serine 251.

This sequence belongs to the ketol-acid reductoisomerase family. The cofactor is Mg(2+).

It carries out the reaction (2R)-2,3-dihydroxy-3-methylbutanoate + NADP(+) = (2S)-2-acetolactate + NADPH + H(+). The enzyme catalyses (2R,3R)-2,3-dihydroxy-3-methylpentanoate + NADP(+) = (S)-2-ethyl-2-hydroxy-3-oxobutanoate + NADPH + H(+). Its pathway is amino-acid biosynthesis; L-isoleucine biosynthesis; L-isoleucine from 2-oxobutanoate: step 2/4. The protein operates within amino-acid biosynthesis; L-valine biosynthesis; L-valine from pyruvate: step 2/4. Its function is as follows. Involved in the biosynthesis of branched-chain amino acids (BCAA). Catalyzes an alkyl-migration followed by a ketol-acid reduction of (S)-2-acetolactate (S2AL) to yield (R)-2,3-dihydroxy-isovalerate. In the isomerase reaction, S2AL is rearranged via a Mg-dependent methyl migration to produce 3-hydroxy-3-methyl-2-ketobutyrate (HMKB). In the reductase reaction, this 2-ketoacid undergoes a metal-dependent reduction by NADPH to yield (R)-2,3-dihydroxy-isovalerate. The polypeptide is Ketol-acid reductoisomerase (NADP(+)) (Albidiferax ferrireducens (strain ATCC BAA-621 / DSM 15236 / T118) (Rhodoferax ferrireducens)).